The following is a 187-amino-acid chain: UPF0340 protein SMU_87 (187 aa).

Belongs to the UPF0340 family.

This chain is UPF0340 protein SMU_87, found in Streptococcus mutans serotype c (strain ATCC 700610 / UA159).